A 414-amino-acid polypeptide reads, in one-letter code: MSGIIATYLIHDDSHNLEKKAEQIALGLTIGSWTHLPHLLQEQLKQHKGNVIHVEELAEHEHTNSYLRKKVKRGIIKIEYPLLNFSPDLPAILTTTFGKLSLDGEVKLIDLTFSDELKKHFPGPKFGIDGIRNLLQVHDRPLLMSIFKGMIGRNIGYLKTQLRDQAIGGVDIVKDDEILFENALTPLTKRIVSGKEVLQSVYETYGHKTLYAVNVTGRTFDLKENAKRAVQAGADILLFNVFAYGLDVLQSLAEDDEIPVPIMAHPAVSGAYSASKLYGISSPLLLGKLLRYAGADFSLFPSPYGSVALEKEEALAISKYLTEDDVFFKKSFSVPSAGIHPGFVPFIIRDFGKDVVINAGGGIHGHPNGAQGGGKAFRTAIDATLQNKPLHEVDDINLHSALQIWGNPSHEVKL.

K99 serves as the catalytic Proton acceptor. Substrate-binding positions include K148, 174–177 (KDDE), H265, G338, and 360–361 (GG). K174, D176, and E177 together coordinate Mg(2+). An N6-carboxylysine modification is found at K174.

Belongs to the RuBisCO large chain family. Type IV subfamily. In terms of assembly, homodimer. It depends on Mg(2+) as a cofactor.

The catalysed reaction is 5-methylsulfanyl-2,3-dioxopentyl phosphate = 2-hydroxy-5-methylsulfanyl-3-oxopent-1-enyl phosphate. Its pathway is amino-acid biosynthesis; L-methionine biosynthesis via salvage pathway; L-methionine from S-methyl-5-thio-alpha-D-ribose 1-phosphate: step 3/6. Its function is as follows. Catalyzes the enolization of 2,3-diketo-5-methylthiopentyl-1-phosphate (DK-MTP-1-P) into 2-hydroxy-3-keto-5-methylthiopentenyl-1-phosphate (HK-MTPenyl-1-P). The protein is 2,3-diketo-5-methylthiopentyl-1-phosphate enolase of Bacillus thuringiensis (strain Al Hakam).